Consider the following 539-residue polypeptide: Ell-associated factor Eaf (539 aa).

The disordered stretch occupies residues 119 to 539 (TRSEMTHHKP…SSNSSDDDDD (421 aa)). Polar residues predominate over residues 132–146 (PATNINHNNIPMSTN). Pro residues predominate over residues 151 to 163 (GPGPGPGSGPSPP). The span at 174–195 (KLENSTMRISSKTKVSTGSRRN) shows a compositional bias: polar residues. Ser205 is modified (phosphoserine). Residues 220-238 (RSPQSAPAWNANNAQQTLP) show a composition bias toward polar residues. Low complexity-rich tracts occupy residues 267–278 (SGSSTGSSTGQP), 309–337 (MHQNHQQHPSPPMHQQQQQQQQQQHYGRG), and 345–375 (NNYAQQQQPQQHHQQQEQQRPSSSSTYSHHS). A compositionally biased stretch (acidic residues) spans 420–435 (DSSDSDSGSESDDSTD). Low complexity-rich tracts occupy residues 461–493 (HQQLQQQPPQQQQQQQQQQQYNHHMQQQHQPQQ) and 520–533 (NDLLQNDLQLSSNS).

Belongs to the EAF family.

Its subcellular location is the nucleus. Promotes transcriptional elongation by Su(Tpl)/ELL. Essential for development. This is Ell-associated factor Eaf from Drosophila willistoni (Fruit fly).